A 476-amino-acid chain; its full sequence is Bifunctional protein HldE (476 aa).

Residues 1-318 form a ribokinase region; sequence MKPILPDYNN…AEAIHGSRDT (318 aa). 195-198 serves as a coordination point for ATP; the sequence is NMSE. Asp264 is a catalytic residue. Residues 344 to 476 form a cytidylyltransferase region; it reads MTNGCFDILH…IIDAIKGGRG (133 aa).

In the N-terminal section; belongs to the carbohydrate kinase PfkB family. It in the C-terminal section; belongs to the cytidylyltransferase family. In terms of assembly, homodimer.

The enzyme catalyses D-glycero-beta-D-manno-heptose 7-phosphate + ATP = D-glycero-beta-D-manno-heptose 1,7-bisphosphate + ADP + H(+). It carries out the reaction D-glycero-beta-D-manno-heptose 1-phosphate + ATP + H(+) = ADP-D-glycero-beta-D-manno-heptose + diphosphate. Its pathway is nucleotide-sugar biosynthesis; ADP-L-glycero-beta-D-manno-heptose biosynthesis; ADP-L-glycero-beta-D-manno-heptose from D-glycero-beta-D-manno-heptose 7-phosphate: step 1/4. The protein operates within nucleotide-sugar biosynthesis; ADP-L-glycero-beta-D-manno-heptose biosynthesis; ADP-L-glycero-beta-D-manno-heptose from D-glycero-beta-D-manno-heptose 7-phosphate: step 3/4. It functions in the pathway bacterial outer membrane biogenesis; LPS core biosynthesis. In terms of biological role, catalyzes the phosphorylation of D-glycero-D-manno-heptose 7-phosphate at the C-1 position to selectively form D-glycero-beta-D-manno-heptose-1,7-bisphosphate. Catalyzes the ADP transfer from ATP to D-glycero-beta-D-manno-heptose 1-phosphate, yielding ADP-D-glycero-beta-D-manno-heptose. The polypeptide is Bifunctional protein HldE (Vibrio vulnificus (strain CMCP6)).